Consider the following 316-residue polypeptide: Olfactory receptor 10H4 (316 aa).

Residues 1-26 are Extracellular-facing; that stretch reads MPSQNYSIISEFNLFGFSAFPQHLLP. Asn-5 carries an N-linked (GlcNAc...) asparagine glycan. Residues 27 to 47 traverse the membrane as a helical segment; it reads ILFLLYLLMFLFTLLGNLLIM. The Cytoplasmic portion of the chain corresponds to 48-55; sequence ATIWIEHR. The chain crosses the membrane as a helical span at residues 56 to 76; it reads LHTPMYLFLCTLSVSEILFTV. The Extracellular portion of the chain corresponds to 77–100; that stretch reads AITPRMLADLLSTHHSITFVACAN. Cys-98 and Cys-190 form a disulfide bridge. Residues 101 to 121 traverse the membrane as a helical segment; sequence QMFFSFMFGFTHSFLLLVMGY. At 122–140 the chain is on the cytoplasmic side; the sequence is DRYVAICHPLRYNVLMSPR. A helical membrane pass occupies residues 141 to 161; sequence DCAHLVACTWAGGSVMGMMVT. Residues 162–198 lie on the Extracellular side of the membrane; that stretch reads TIVFHLTFCGSNVIHHFFCHVLSLLKLACENKTSSVI. The helical transmembrane segment at 199 to 219 threads the bilayer; it reads MGVMLVCVTALIGCLFLIILS. Topologically, residues 220–239 are cytoplasmic; it reads YVFIVAAILRIPSAEGRHKT. Residues 240–260 traverse the membrane as a helical segment; sequence FSTCVSHLTVVVTHYSFASFI. Over 261 to 273 the chain is Extracellular; that stretch reads YLKPKGLHSMYSD. A helical membrane pass occupies residues 274-294; sequence ALMATTYTVFTPFLSPIIFSL. Over 295 to 316 the chain is Cytoplasmic; that stretch reads RNKELKNAINKNFYRKFCPPSS.

This sequence belongs to the G-protein coupled receptor 1 family.

It localises to the cell membrane. Its function is as follows. Odorant receptor. This chain is Olfactory receptor 10H4 (OR10H4), found in Homo sapiens (Human).